We begin with the raw amino-acid sequence, 387 residues long: Phosphoglycerate kinase (387 aa).

Residues 21–23, R36, 59–62, R113, and R146 each bind substrate; these read DLN and HLGR. Residues K197, E314, and 340–343 contribute to the ATP site; that span reads GGDT.

The protein belongs to the phosphoglycerate kinase family. As to quaternary structure, monomer.

It is found in the cytoplasm. The catalysed reaction is (2R)-3-phosphoglycerate + ATP = (2R)-3-phospho-glyceroyl phosphate + ADP. It functions in the pathway carbohydrate degradation; glycolysis; pyruvate from D-glyceraldehyde 3-phosphate: step 2/5. This is Phosphoglycerate kinase from Alcanivorax borkumensis (strain ATCC 700651 / DSM 11573 / NCIMB 13689 / SK2).